The chain runs to 81 residues: Small ribosomal subunit protein bS18 (81 aa).

The protein belongs to the bacterial ribosomal protein bS18 family. Part of the 30S ribosomal subunit. Forms a tight heterodimer with protein bS6.

In terms of biological role, binds as a heterodimer with protein bS6 to the central domain of the 16S rRNA, where it helps stabilize the platform of the 30S subunit. This is Small ribosomal subunit protein bS18 from Lactococcus lactis subsp. cremoris (strain MG1363).